Here is a 1133-residue protein sequence, read N- to C-terminus: Early transcription factor large subunit homolog (1133 aa).

Residues 52–352 enclose the Helicase ATP-binding domain; sequence KGGRAFFPCD…PNGQPLQRQQ (301 aa). 99–106 contacts ATP; it reads WQTGTGKS. Residues 281 to 284 carry the DEAH box motif; sequence DEIH. One can recognise a Helicase C-terminal domain in the interval 524–724; that stretch reads MMKDILSIIR…EGDKALRKHA (201 aa).

It belongs to the DEAD box helicase family. DEAH subfamily.

The protein localises to the virion. The catalysed reaction is ATP + H2O = ADP + phosphate + H(+). Functionally, putative initation factor. The protein is Early transcription factor large subunit homolog of African swine fever virus (isolate Tick/South Africa/Pretoriuskop Pr4/1996) (ASFV).